Consider the following 735-residue polypeptide: Cyclic nucleotide-gated channel cone photoreceptor subunit alpha (735 aa).

The Cytoplasmic portion of the chain corresponds to 1–214 (MAKINTQHSY…PSSNMYYNWL (214 aa)). A disordered region spans residues 142-191 (VNFSNNTNEDKKEEKKEVKEEKKEEKKEEKKEEKKDDKKDDKKDDKKDDK). Positions 149-191 (NEDKKEEKKEVKEEKKEEKKEEKKEEKKDDKKDDKKDDKKDDK) are enriched in basic and acidic residues. A helical transmembrane segment spans residues 215–236 (TIIAAPVFYNWCMLICRACFDE). Residues 237 to 246 (LQIDHIKLWL) are Extracellular-facing. A helical transmembrane segment spans residues 247 to 267 (FLDYCSDIIYVFDMFVRFRTG). Residues 268-292 (FLEQGLLVKDEKKLRDHYTQTVQFK) are Cytoplasmic-facing. A helical transmembrane segment spans residues 293-311 (LDVLSLLPTDLAYLKLGLN). Topologically, residues 312–316 (YPELR) are extracellular. Residues 317-335 (FNRLLRIARLFEFFDRTET) traverse the membrane as a helical segment. The Cytoplasmic portion of the chain corresponds to 336–342 (RTNYPNM). The helical transmembrane segment at 343 to 366 (FRIGNLVLYILIIIHWNACIYFAI) threads the bilayer. Residues 367-389 (SKVIGFGTDSWVYPNVSIPEYGR) lie on the Extracellular side of the membrane. 2 helical membrane-spanning segments follow: residues 390 to 424 (LSRK…LFVV) and 425 to 449 (IDFL…SNMN). The Cytoplasmic segment spans residues 450–735 (ASRAEFQAKV…PEKPEEQKKD (286 aa)). 3',5'-cyclic GMP-binding positions include 532–654 (LLIE…DNLI), Glu591, and Arg606. The segment at 715 to 735 (GSGSLSVGEPEPEKPEEQKKD) is disordered. Residues 725 to 735 (EPEKPEEQKKD) are compositionally biased toward basic and acidic residues.

Belongs to the cyclic nucleotide-gated cation channel (TC 1.A.1.5) family.

The protein localises to the membrane. Its function is as follows. Visual signal transduction is mediated by a G-protein coupled cascade using cGMP as second messenger. This protein can be activated by cyclic GMP which leads to an opening of the cation channel and thereby causing a depolarization of cone photoreceptors. The polypeptide is Cyclic nucleotide-gated channel cone photoreceptor subunit alpha (Gallus gallus (Chicken)).